Reading from the N-terminus, the 243-residue chain is Small ribosomal subunit protein eS4 (243 aa).

The 63-residue stretch at 37–99 (IPLALLLKHY…SDLYFRIVPD (63 aa)) folds into the S4 RNA-binding domain.

It belongs to the eukaryotic ribosomal protein eS4 family.

The chain is Small ribosomal subunit protein eS4 (rps4e) from Sulfurisphaera tokodaii (strain DSM 16993 / JCM 10545 / NBRC 100140 / 7) (Sulfolobus tokodaii).